The sequence spans 568 residues: Acetyl-coenzyme A carboxylase carboxyl transferase subunits beta/alpha (568 aa).

The segment at 1–253 (MAEPARTLAQ…QTAEYLRDAG (253 aa)) is acetyl-coenzyme A carboxylase carboxyl transferase subunit beta. A CoA carboxyltransferase N-terminal domain is found at 21–290 (RWTRCPNCRS…APAAERGYRT (270 aa)). The tract at residues 21–536 (RWTRCPNCRS…AAALRASIGE (516 aa)) is carboxyltransferase. 4 residues coordinate Zn(2+): Cys-25, Cys-28, Cys-44, and Cys-47. The segment at 25-47 (CPNCRSLVYLRRLRRNGHVCPDC) adopts a C4-type zinc-finger fold. Residues 254–559 (MVDLVVPRHE…RRRFDRFGDP (306 aa)) form an acetyl-coenzyme A carboxylase carboxyl transferase subunit alpha region. The 251-residue stretch at 286 to 536 (RGYRTRPRPA…AAALRASIGE (251 aa)) folds into the CoA carboxyltransferase C-terminal domain.

It in the N-terminal section; belongs to the AccD/PCCB family. This sequence in the C-terminal section; belongs to the AccA family. As to quaternary structure, acetyl-CoA carboxylase is a heterotetramer composed of biotin carboxyl carrier protein (AccB), biotin carboxylase (AccC) and two subunits of ACCase subunit beta/alpha. Zn(2+) is required as a cofactor.

It localises to the cytoplasm. It catalyses the reaction N(6)-carboxybiotinyl-L-lysyl-[protein] + acetyl-CoA = N(6)-biotinyl-L-lysyl-[protein] + malonyl-CoA. The protein operates within lipid metabolism; malonyl-CoA biosynthesis; malonyl-CoA from acetyl-CoA: step 1/1. In terms of biological role, component of the acetyl coenzyme A carboxylase (ACC) complex. Biotin carboxylase (BC) catalyzes the carboxylation of biotin on its carrier protein (BCCP) and then the CO(2) group is transferred by the transcarboxylase to acetyl-CoA to form malonyl-CoA. This chain is Acetyl-coenzyme A carboxylase carboxyl transferase subunits beta/alpha (accD), found in Saccharopolyspora erythraea (strain ATCC 11635 / DSM 40517 / JCM 4748 / NBRC 13426 / NCIMB 8594 / NRRL 2338).